The following is a 492-amino-acid chain: Probable Xaa-Pro aminopeptidase AO090005001240 (492 aa).

Asp272, Asp283, Glu420, and Glu459 together coordinate Mn(2+).

Belongs to the peptidase M24B family. It depends on Mn(2+) as a cofactor.

It catalyses the reaction Release of any N-terminal amino acid, including proline, that is linked to proline, even from a dipeptide or tripeptide.. Catalyzes the removal of a penultimate prolyl residue from the N-termini of peptides. The protein is Probable Xaa-Pro aminopeptidase AO090005001240 of Aspergillus oryzae (strain ATCC 42149 / RIB 40) (Yellow koji mold).